A 160-amino-acid polypeptide reads, in one-letter code: Nucleotide-binding protein VSAL_I1728 (160 aa).

This sequence belongs to the YajQ family.

Nucleotide-binding protein. This is Nucleotide-binding protein VSAL_I1728 from Aliivibrio salmonicida (strain LFI1238) (Vibrio salmonicida (strain LFI1238)).